The chain runs to 353 residues: uncharacterized protein (353 aa).

This is an uncharacterized protein from Methanocaldococcus jannaschii (strain ATCC 43067 / DSM 2661 / JAL-1 / JCM 10045 / NBRC 100440) (Methanococcus jannaschii).